The chain runs to 137 residues: Large ribosomal subunit protein uL16 (137 aa).

This sequence belongs to the universal ribosomal protein uL16 family. Part of the 50S ribosomal subunit.

Its function is as follows. Binds 23S rRNA and is also seen to make contacts with the A and possibly P site tRNAs. In Leuconostoc mesenteroides subsp. mesenteroides (strain ATCC 8293 / DSM 20343 / BCRC 11652 / CCM 1803 / JCM 6124 / NCDO 523 / NBRC 100496 / NCIMB 8023 / NCTC 12954 / NRRL B-1118 / 37Y), this protein is Large ribosomal subunit protein uL16.